The following is a 154-amino-acid chain: Prefoldin subunit 2 (154 aa).

Over residues isoleucine 124 to serine 139 the composition is skewed to basic and acidic residues. The tract at residues isoleucine 124–serine 154 is disordered. Low complexity predominate over residues glutamate 140–serine 154.

The protein belongs to the prefoldin subunit beta family. As to quaternary structure, heterohexamer of two PFD-alpha type and four PFD-beta type subunits. Component of the PAQosome complex which is responsible for the biogenesis of several protein complexes and which consists of R2TP complex members RUVBL1, RUVBL2, RPAP3 and PIH1D1, URI complex members PFDN2, PFDN6, PDRG1, UXT and URI1 as well as ASDURF, POLR2E and DNAAF10/WDR92. Interacts with URI1; the interaction is phosphorylation-dependent and occurs in a growth-dependent manner.

Its subcellular location is the nucleus. It localises to the cytoplasm. The protein resides in the mitochondrion. Functionally, binds specifically to cytosolic chaperonin (c-CPN) and transfers target proteins to it. Binds to nascent polypeptide chain and promotes folding in an environment in which there are many competing pathways for nonnative proteins. This is Prefoldin subunit 2 (PFDN2) from Homo sapiens (Human).